The primary structure comprises 394 residues: Flap endonuclease 1 (394 aa).

The interval 1–104 is N-domain; the sequence is MGIKQLFTII…GELARRYQRK (104 aa). Mg(2+) is bound at residue aspartate 34. DNA-binding residues include arginine 47 and arginine 70. Mg(2+) contacts are provided by aspartate 86, glutamate 158, glutamate 160, aspartate 179, and aspartate 181. The segment at 122 to 253 is I-domain; the sequence is DVEKFSRRTV…STALKLIREH (132 aa). Glutamate 158 is a DNA binding site. Glycine 231 and aspartate 233 together coordinate DNA. Aspartate 233 serves as a coordination point for Mg(2+). The tract at residues 340-348 is interaction with PCNA; that stretch reads QQQRLEGFF. The interval 358 to 394 is disordered; sequence QKAHKRKLEVKAEEAKKKLKAEKKEKAKAKARPRGTA. Residues 374 to 394 show a composition bias toward basic residues; it reads KKLKAEKKEKAKAKARPRGTA.

This sequence belongs to the XPG/RAD2 endonuclease family. FEN1 subfamily. As to quaternary structure, interacts with PCNA. Three molecules of FEN1 bind to one PCNA trimer with each molecule binding to one PCNA monomer. PCNA stimulates the nuclease activity without altering cleavage specificity. Mg(2+) is required as a cofactor. Phosphorylated. Phosphorylation upon DNA damage induces relocalization to the nuclear plasma.

The protein localises to the nucleus. It is found in the nucleolus. The protein resides in the nucleoplasm. It localises to the mitochondrion. Structure-specific nuclease with 5'-flap endonuclease and 5'-3' exonuclease activities involved in DNA replication and repair. During DNA replication, cleaves the 5'-overhanging flap structure that is generated by displacement synthesis when DNA polymerase encounters the 5'-end of a downstream Okazaki fragment. It enters the flap from the 5'-end and then tracks to cleave the flap base, leaving a nick for ligation. Also involved in the long patch base excision repair (LP-BER) pathway, by cleaving within the apurinic/apyrimidinic (AP) site-terminated flap. Acts as a genome stabilization factor that prevents flaps from equilibrating into structures that lead to duplications and deletions. Also possesses 5'-3' exonuclease activity on nicked or gapped double-stranded DNA, and exhibits RNase H activity. Also involved in replication and repair of rDNA and in repairing mitochondrial DNA. The chain is Flap endonuclease 1 from Pyricularia oryzae (strain 70-15 / ATCC MYA-4617 / FGSC 8958) (Rice blast fungus).